The chain runs to 275 residues: MIHFTKMHGLGNDFMVVDGVTQNVFFSPEQIRRLANRNFGVGFDQLLLVEPPYDPDLDFHYRIFNADGSEVEQCGNGARCFARFVRNKGLTQKNKIRVSTSSGKMTLRLERDGSVVVNMGVPVTDPSNIPFKAKKVEKTYLLQTPVQTFLCGAISMGNPHCVIEVDDIDTVAVDEIGALLTRHERFSKGVNVGFMQIINPGHIKLRVYERGAGETLACGTGACAAAAIGQLQDKLSRQVRVDLPGGTLHIDWDGEGKPLWMTGPAEHVYDGQIQL.

3 residues coordinate substrate: asparagine 12, glutamine 45, and asparagine 65. Residue cysteine 74 is the Proton donor of the active site. Residues glycine 75 to asparagine 76, asparagine 158, asparagine 191, and glutamate 209 to arginine 210 each bind substrate. Residue cysteine 218 is the Proton acceptor of the active site. A substrate-binding site is contributed by glycine 219–threonine 220.

The protein belongs to the diaminopimelate epimerase family. In terms of assembly, homodimer.

Its subcellular location is the cytoplasm. It catalyses the reaction (2S,6S)-2,6-diaminopimelate = meso-2,6-diaminopimelate. Its pathway is amino-acid biosynthesis; L-lysine biosynthesis via DAP pathway; DL-2,6-diaminopimelate from LL-2,6-diaminopimelate: step 1/1. Its function is as follows. Catalyzes the stereoinversion of LL-2,6-diaminopimelate (L,L-DAP) to meso-diaminopimelate (meso-DAP), a precursor of L-lysine and an essential component of the bacterial peptidoglycan. The chain is Diaminopimelate epimerase from Shewanella denitrificans (strain OS217 / ATCC BAA-1090 / DSM 15013).